Here is a 209-residue protein sequence, read N- to C-terminus: Thiamine-phosphate synthase (209 aa).

Residues 41 to 45 (QLREK) and N73 contribute to the 4-amino-2-methyl-5-(diphosphooxymethyl)pyrimidine site. Positions 74 and 93 each coordinate Mg(2+). S112 is a 4-amino-2-methyl-5-(diphosphooxymethyl)pyrimidine binding site. 138 to 140 (TGT) is a binding site for 2-[(2R,5Z)-2-carboxy-4-methylthiazol-5(2H)-ylidene]ethyl phosphate. Residue K141 participates in 4-amino-2-methyl-5-(diphosphooxymethyl)pyrimidine binding. 2-[(2R,5Z)-2-carboxy-4-methylthiazol-5(2H)-ylidene]ethyl phosphate-binding positions include G168 and 188–189 (VS).

This sequence belongs to the thiamine-phosphate synthase family. It depends on Mg(2+) as a cofactor.

The catalysed reaction is 2-[(2R,5Z)-2-carboxy-4-methylthiazol-5(2H)-ylidene]ethyl phosphate + 4-amino-2-methyl-5-(diphosphooxymethyl)pyrimidine + 2 H(+) = thiamine phosphate + CO2 + diphosphate. The enzyme catalyses 2-(2-carboxy-4-methylthiazol-5-yl)ethyl phosphate + 4-amino-2-methyl-5-(diphosphooxymethyl)pyrimidine + 2 H(+) = thiamine phosphate + CO2 + diphosphate. It catalyses the reaction 4-methyl-5-(2-phosphooxyethyl)-thiazole + 4-amino-2-methyl-5-(diphosphooxymethyl)pyrimidine + H(+) = thiamine phosphate + diphosphate. It participates in cofactor biosynthesis; thiamine diphosphate biosynthesis; thiamine phosphate from 4-amino-2-methyl-5-diphosphomethylpyrimidine and 4-methyl-5-(2-phosphoethyl)-thiazole: step 1/1. Its function is as follows. Condenses 4-methyl-5-(beta-hydroxyethyl)thiazole monophosphate (THZ-P) and 2-methyl-4-amino-5-hydroxymethyl pyrimidine pyrophosphate (HMP-PP) to form thiamine monophosphate (TMP). This Alkaliphilus oremlandii (strain OhILAs) (Clostridium oremlandii (strain OhILAs)) protein is Thiamine-phosphate synthase.